The primary structure comprises 98 residues: MTMVYANIFLAFITSLMGLLMYRSHLMSSLLCLEGMMLSLFVMMTVTILNNHFTLANMAPIVLLVFAACEAALGLSLLVMVSNTYGTDYVQNLNLLQC.

3 helical membrane-spanning segments follow: residues 1–21 (MTMV…GLLM), 29–49 (SLLC…VTIL), and 61–81 (IVLL…LVMV).

This sequence belongs to the complex I subunit 4L family. As to quaternary structure, core subunit of respiratory chain NADH dehydrogenase (Complex I) which is composed of 45 different subunits.

It localises to the mitochondrion inner membrane. It catalyses the reaction a ubiquinone + NADH + 5 H(+)(in) = a ubiquinol + NAD(+) + 4 H(+)(out). In terms of biological role, core subunit of the mitochondrial membrane respiratory chain NADH dehydrogenase (Complex I) which catalyzes electron transfer from NADH through the respiratory chain, using ubiquinone as an electron acceptor. Part of the enzyme membrane arm which is embedded in the lipid bilayer and involved in proton translocation. This Monachus monachus (Mediterranean monk seal) protein is NADH-ubiquinone oxidoreductase chain 4L (MT-ND4L).